The chain runs to 405 residues: 3-hydroxy-3-methylglutaryl-coenzyme A reductase (405 aa).

Residues glutamate 101 and aspartate 305 each act as charge relay system in the active site. Histidine 400 serves as the catalytic Proton donor.

It belongs to the HMG-CoA reductase family. In terms of assembly, homodimer.

It is found in the cytoplasm. The catalysed reaction is (R)-mevalonate + 2 NADP(+) + CoA = (3S)-3-hydroxy-3-methylglutaryl-CoA + 2 NADPH + 2 H(+). It participates in metabolic intermediate biosynthesis; (R)-mevalonate biosynthesis; (R)-mevalonate from acetyl-CoA: step 3/3. Its activity is regulated as follows. Is competitively inhibited by lovastatin (formerly called mevinolin). Lovastatin also blocks the growth of H.salinarum, and this effect is reversed by addition of mevalonate, indicating the critical role that the mevalonate pathway plays in isoprenoid biosynthesis by these archaea. Catalyzes the NADPH-dependent reductive deacylation of (S)-3-hydroxy-3-methylglutaryl-CoA (HMG-CoA) to (R)-mevalonate. Cannot use NADH instead of NADPH. Functions in the mevalonate (MVA) pathway leading to isopentenyl diphosphate (IPP), a key precursor for the biosynthesis of isoprenoid compounds such as archaeal membrane lipids. This is 3-hydroxy-3-methylglutaryl-coenzyme A reductase (hmgA) from Halobacterium salinarum (strain ATCC 29341 / DSM 671 / R1).